The following is a 511-amino-acid chain: 2'-acyl-2-O-sulfo-trehalose (hydroxy)phthioceranyltransferase PapA1 (511 aa).

The protein belongs to the PapA acyltransferase family.

The catalysed reaction is a (hydroxy)phthioceranyl-[(hydroxy)phthioceranic acid synthase] + 2'-palmitoyl/stearoyl-2-O-sulfo-alpha,alpha-trehalose = a 3'-(hydroxy)phthioceranyl-2'-palmitoyl/stearoyl-2-O-sulfo-alpha,alpha-trehalose + holo-[(hydroxy)phthioceranic acid synthase].. In terms of biological role, required for the biosynthesis of sulfolipid-1 (SL-1), a major mycobacterial cell wall lipid. Catalyzes the acylation of trehalose-2-sulfate-2'-palmitate (SL659) by adding the (hydroxy)phthioceranoyl group at the 3'-position to yield the diacylated intermediate 2-palmitoyl-3-(C43)-phthioceranyl-alpha, alpha'-D-trehalose-2'-sulfate (SL1278). This Mycobacterium tuberculosis (strain CDC 1551 / Oshkosh) protein is 2'-acyl-2-O-sulfo-trehalose (hydroxy)phthioceranyltransferase PapA1 (papA1).